The primary structure comprises 490 residues: Glutamate--tRNA ligase 2 (490 aa).

Positions 33–43 (PSPTGYLHIGG) match the 'HIGH' region motif. A 'KMSKS' region motif is present at residues 262–266 (KLSKR). Position 265 (lysine 265) interacts with ATP.

This sequence belongs to the class-I aminoacyl-tRNA synthetase family. Glutamate--tRNA ligase type 1 subfamily. As to quaternary structure, monomer.

It localises to the cytoplasm. It carries out the reaction tRNA(Glu) + L-glutamate + ATP = L-glutamyl-tRNA(Glu) + AMP + diphosphate. Catalyzes the attachment of glutamate to tRNA(Glu) in a two-step reaction: glutamate is first activated by ATP to form Glu-AMP and then transferred to the acceptor end of tRNA(Glu). This Parvibaculum lavamentivorans (strain DS-1 / DSM 13023 / NCIMB 13966) protein is Glutamate--tRNA ligase 2.